The primary structure comprises 340 residues: Phosphoribosylformylglycinamidine cyclo-ligase (340 aa).

Belongs to the AIR synthase family.

It is found in the cytoplasm. It carries out the reaction 2-formamido-N(1)-(5-O-phospho-beta-D-ribosyl)acetamidine + ATP = 5-amino-1-(5-phospho-beta-D-ribosyl)imidazole + ADP + phosphate + H(+). It participates in purine metabolism; IMP biosynthesis via de novo pathway; 5-amino-1-(5-phospho-D-ribosyl)imidazole from N(2)-formyl-N(1)-(5-phospho-D-ribosyl)glycinamide: step 2/2. In Streptococcus pneumoniae serotype 19F (strain G54), this protein is Phosphoribosylformylglycinamidine cyclo-ligase.